A 157-amino-acid polypeptide reads, in one-letter code: DNA-binding protein MNB1B (157 aa).

Disordered stretches follow at residues 1-45, 59-87, and 109-157; these read MKGA…KRAP, FKEKNPKNKSVAAVGKAAGDRWKSLSESD, and YNKG…DDDE. Composition is skewed to basic and acidic residues over residues 10 to 27 and 76 to 87; these read AKADAKLAVKSKGAEKPA and AGDRWKSLSESD. The HMG box DNA-binding region spans 41–110; the sequence is PKRAPSAFFV…EYNKAIAAYN (70 aa). Composition is skewed to acidic residues over residues 124–133 and 141–157; these read EEEEEDEEES and NDEDDEEGSEEDEDDDE. Phosphoserine; by CK2 is present on Ser-149.

Expressed in all tissues examined.

Its subcellular location is the nucleus. Its function is as follows. Recognizes an AAGG motif at the MNF1-binding site. This Zea mays (Maize) protein is DNA-binding protein MNB1B (MNB1B).